Reading from the N-terminus, the 228-residue chain is FAS1 domain-containing protein NCU02579 (228 aa).

A signal peptide spans 1–18 (MRFTPYLVLAPTAAVAFA). Residues 50 to 74 (PAVGLGPAMPPSGAPQADGPANAGG) are disordered. The FAS1 domain occupies 77-225 (SVMLSDVMGR…GEVWILKGVR (149 aa)).

It localises to the vacuole. The protein is FAS1 domain-containing protein NCU02579 of Neurospora crassa (strain ATCC 24698 / 74-OR23-1A / CBS 708.71 / DSM 1257 / FGSC 987).